Reading from the N-terminus, the 343-residue chain is Heme A synthase (343 aa).

8 consecutive transmembrane segments (helical) span residues 13–33 (VAIW…VGGA), 96–116 (HRLL…VFLI), 130–150 (AMLG…SSGL), 161–181 (LMTH…TALD), 197–217 (GWAL…ALVA), 258–278 (FNHR…VVLA), 294–314 (AVAA…MAAV), and 318–338 (LGVL…AFAW). Histidine 260 is a binding site for heme. Heme is bound at residue histidine 322.

This sequence belongs to the COX15/CtaA family. Type 2 subfamily. Interacts with CtaB. Heme b serves as cofactor.

The protein resides in the cell membrane. The catalysed reaction is Fe(II)-heme o + 2 A + H2O = Fe(II)-heme a + 2 AH2. It participates in porphyrin-containing compound metabolism; heme A biosynthesis; heme A from heme O: step 1/1. In terms of biological role, catalyzes the conversion of heme O to heme A by two successive hydroxylations of the methyl group at C8. The first hydroxylation forms heme I, the second hydroxylation results in an unstable dihydroxymethyl group, which spontaneously dehydrates, resulting in the formyl group of heme A. This Caulobacter vibrioides (strain ATCC 19089 / CIP 103742 / CB 15) (Caulobacter crescentus) protein is Heme A synthase.